The chain runs to 75 residues: Penaeidin-3n (75 aa).

A signal peptide spans 1 to 19 (MRLVVCLVFLASFALVCQG). A Pyrrolidone carboxylic acid modification is found at Gln20. 2 disulfide bridges follow: Cys44–Cys59 and Cys48–Cys66. The residue at position 74 (Ser74) is a Serine amide.

Belongs to the penaeidin family.

It localises to the cytoplasmic granule. Functionally, antibacterial and antifungal activity. Presents chitin-binding activity. This Penaeus setiferus (Atlantic white shrimp) protein is Penaeidin-3n.